Reading from the N-terminus, the 430-residue chain is Tetraacyldisaccharide 4'-kinase (430 aa).

Residues 1–370 form a tetraacyldisaccharide 4'-kinase region; that stretch reads MGALRPQPPR…EPTLPENHRP (370 aa). Position 70-77 (70-77) interacts with ATP; it reads IAGGAGKT. The interval 371 to 396 is UPF0434; that stretch reads MDPKLLQLLVCPVTKGPLRYDRAAQE.

The protein in the N-terminal section; belongs to the LpxK family. It in the C-terminal section; belongs to the UPF0434 family.

The catalysed reaction is a lipid A disaccharide + ATP = a lipid IVA + ADP + H(+). It participates in glycolipid biosynthesis; lipid IV(A) biosynthesis; lipid IV(A) from (3R)-3-hydroxytetradecanoyl-[acyl-carrier-protein] and UDP-N-acetyl-alpha-D-glucosamine: step 6/6. Functionally, transfers the gamma-phosphate of ATP to the 4'-position of a tetraacyldisaccharide 1-phosphate intermediate (termed DS-1-P) to form tetraacyldisaccharide 1,4'-bis-phosphate (lipid IVA). This is Tetraacyldisaccharide 4'-kinase (lpxK) from Verminephrobacter eiseniae (strain EF01-2).